A 455-amino-acid chain; its full sequence is N-lysine methyltransferase setd6 (455 aa).

The SET domain occupies 38 to 266 (PKVYISTEGT…AGQELFNTYG (229 aa)).

The protein belongs to the class V-like SAM-binding methyltransferase superfamily. Histone-lysine methyltransferase family. SETD6 subfamily.

It is found in the nucleus. Protein-lysine N-methyltransferase. This Xenopus laevis (African clawed frog) protein is N-lysine methyltransferase setd6 (setd6).